Reading from the N-terminus, the 239-residue chain is Leucine rich adaptor protein 1 (239 aa).

LRR repeat units follow at residues 55–83 (LGDKIMALRMELAYLRAIDVKILQQLVTL) and 93–114 (LLEERGTLTSHCSSLTSSQYSL). The segment covering 105–116 (SSLTSSQYSLTG) has biased composition (low complexity). The tract at residues 105-138 (SSLTSSQYSLTGGSPGRSRRGSWDSLPDTSSTDR) is disordered. Phosphoserine is present on residues Ser118, Ser126, and Ser129.

Forms a tripartite complex with CDC42BPA/CDC42BPB and MYO18A acting as an adapter connecting both. Its binding to CDC42BPA/CDC42BPB results in their activation by abolition of their negative autoregulation. Interacts with CDC42BPA and CDC42BPB. In terms of processing, phosphorylated.

Its subcellular location is the cytoplasm. In terms of biological role, acts as an activator of the canonical NF-kappa-B pathway and drive the production of pro-inflammatory cytokines. Promotes the antigen (Ag)-presenting and priming function of dendritic cells via the canonical NF-kappa-B pathway. In concert with MYO18A and CDC42BPA/CDC42BPB, is involved in modulating lamellar actomyosin retrograde flow that is crucial to cell protrusion and migration. Activates CDC42BPA/CDC42BPB and targets it to actomyosin through its interaction with MYO18A, leading to MYL9/MLC2 phosphorylation and MYH9/MYH10-dependent actomyosin assembly in the lamella. The chain is Leucine rich adaptor protein 1 (Lurap1) from Mus musculus (Mouse).